We begin with the raw amino-acid sequence, 235 residues long: Dual specificity protein phosphatase 15 (235 aa).

G2 is lipidated: N-myristoyl glycine. The Tyrosine-protein phosphatase domain occupies 4-144 (GMTKVLPGLY…LEEFGWANSQ (141 aa)). Catalysis depends on C88, which acts as the Phosphocysteine intermediate. Over residues 183–193 (AASATTASSAA) the composition is skewed to low complexity. The disordered stretch occupies residues 183 to 212 (AASATTASSAAEGTLQRLVPRSPRDSHQPL).

It belongs to the protein-tyrosine phosphatase family. Non-receptor class dual specificity subfamily. In terms of tissue distribution, isoform 1 is expressed in testis; predominantly in developing spermatocytes (at protein level). Isoform 2 is highly expressed in testis. Expressed in spinal cord and specifically in oligodendroglial cells. Expressed in embryonic brain cortex; down-regulated in mice with experimental autoimmune encephalomyelitis (EAE).

The protein resides in the cell membrane. It catalyses the reaction O-phospho-L-tyrosyl-[protein] + H2O = L-tyrosyl-[protein] + phosphate. It carries out the reaction O-phospho-L-seryl-[protein] + H2O = L-seryl-[protein] + phosphate. The enzyme catalyses O-phospho-L-threonyl-[protein] + H2O = L-threonyl-[protein] + phosphate. May dephosphorylate MAPK13, ATF2, ERBB3, PDGFRB and SNX6. In terms of biological role, may play a role in the regulation of oligodendrocyte differentiation. May play a role in the regulation of myelin formation. Involved in the regulation of Erk1/2 phosphorylation in Schwann cells; the signaling may be linked to the regulation of myelination. This Mus musculus (Mouse) protein is Dual specificity protein phosphatase 15.